Reading from the N-terminus, the 358-residue chain is Ganglioside-induced differentiation-associated protein 1 (358 aa).

A GST N-terminal domain is found at 24 to 105 (VKLILYHWTH…YLEQTFLDER (82 aa)). Residues K50, K172, K173, K188, and K190 each participate in a glycyl lysine isopeptide (Lys-Gly) (interchain with G-Cter in ubiquitin) cross-link. Residues 153-309 (PAYATTRIRS…LISAVLPTAF (157 aa)) form the GST C-terminal domain. At K203 the chain carries N6-acetyllysine; alternate. Residue K203 forms a Glycyl lysine isopeptide (Lys-Gly) (interchain with G-Cter in ubiquitin); alternate linkage. Residues K206, K207, and K214 each participate in a glycyl lysine isopeptide (Lys-Gly) (interchain with G-Cter in ubiquitin) cross-link. 2 helical membrane-spanning segments follow: residues 292–312 (VLGH…FRVA) and 320–340 (LGTT…FMLF). The interval 320–358 (LGTTLVVGLLAGVGYFAFMLFRKRLGSMILAFRPRPNYF) is required for mitochondrial localization.

This sequence belongs to the GST superfamily. In terms of assembly, homodimer. In terms of processing, ubiquitinated by PRKN during mitophagy, leading to its degradation and enhancement of mitophagy. Deubiquitinated by USP30. Highly expressed in whole brain and spinal cord. Predominant expression in central tissues of the nervous system not only in neurons but also in Schwann cells.

The protein resides in the mitochondrion outer membrane. The protein localises to the cytoplasm. In terms of biological role, regulates the mitochondrial network by promoting mitochondrial fission. In Homo sapiens (Human), this protein is Ganglioside-induced differentiation-associated protein 1 (GDAP1).